A 76-amino-acid chain; its full sequence is MALVPYTSPLDIVFYPVCAFLFCVIGFAFFATFIVSEMTTAKAQKNIFRELTLALIASMSLGLGLFFVLLAGGIYV.

The next 2 membrane-spanning stretches (helical) occupy residues 14–34 (FYPV…ATFI) and 54–74 (ALIA…AGGI).

Belongs to the OST5 family. Component of the oligosaccharyltransferase (OST) complex.

It localises to the membrane. Its function is as follows. Subunit of the oligosaccharyl transferase (OST) complex that catalyzes the initial transfer of a defined glycan (Glc(3)Man(9)GlcNAc(2) in eukaryotes) from the lipid carrier dolichol-pyrophosphate to an asparagine residue within an Asn-X-Ser/Thr consensus motif in nascent polypeptide chains, the first step in protein N-glycosylation. N-glycosylation occurs cotranslationally and the complex associates with the Sec61 complex at the channel-forming translocon complex that mediates protein translocation across the endoplasmic reticulum (ER). All subunits are required for a maximal enzyme activity. This is Dolichyl-diphosphooligosaccharide--protein glycosyltransferase subunit OST5 from Dictyostelium discoideum (Social amoeba).